The chain runs to 548 residues: Chaperonin GroEL (548 aa).

ATP contacts are provided by residues 30-33, K51, 87-91, G415, and D495; these read TLGP and DGTTT.

Belongs to the chaperonin (HSP60) family. Forms a cylinder of 14 subunits composed of two heptameric rings stacked back-to-back. Interacts with the co-chaperonin GroES.

It is found in the cytoplasm. The catalysed reaction is ATP + H2O + a folded polypeptide = ADP + phosphate + an unfolded polypeptide.. In terms of biological role, together with its co-chaperonin GroES, plays an essential role in assisting protein folding. The GroEL-GroES system forms a nano-cage that allows encapsulation of the non-native substrate proteins and provides a physical environment optimized to promote and accelerate protein folding. The chain is Chaperonin GroEL from Idiomarina loihiensis (strain ATCC BAA-735 / DSM 15497 / L2-TR).